The sequence spans 247 residues: Sortase A (247 aa).

The Cytoplasmic segment spans residues 1 to 9 (MRNKKKLHG). Residues 10 to 30 (FFNFVRWLLVVLLIIVGLALV) form a helical membrane-spanning segment. The Extracellular portion of the chain corresponds to 31-247 (FNKPIRNAFI…FSKKYNQINL (217 aa)). The Proton donor/acceptor role is filled by H140. Catalysis depends on C206, which acts as the Acyl-thioester intermediate.

Belongs to the bacterial sortase family. Class A subfamily.

It localises to the cell membrane. Transpeptidase that anchors surface proteins to the cell wall. Recognizes and modifies its substrate by proteolytic cleavage of a C-terminal sorting signal. Following cleavage, a covalent intermediate is formed via a thioester bond between the sortase and its substrate, which is then transferred and covalently attached to the cell wall. This sortase recognizes a Leu-Pro-x-Thr-Gly (LPXTG) motif, which is cleaved by the sortase between the threonine and glycine residues. Essential for adherence to eukaryotic cells and for binding to fibronectin and fibrinogen. The chain is Sortase A from Streptococcus agalactiae serotype III (strain NEM316).